The primary structure comprises 491 residues: Monocarboxylate transport permease protein (491 aa).

13 helical membrane-spanning segments follow: residues 7–27, 55–75, 83–103, 130–150, 157–177, 187–207, 246–266, 277–297, 322–342, 374–396, 400–422, 427–447, and 465–485; these read GTAL…GFVA, WFLV…PALV, FFAL…MPVL, LAVA…QLVG, ALGL…ALYT, LIAF…VALI, LALG…GIFA, AIML…GYMG, WFSG…AAVM, ITSL…QFAL, LLGG…TNWF, LLAG…DAGW, and GLLA…LLPA.

The protein belongs to the sodium:solute symporter (SSF) (TC 2.A.21) family.

It localises to the cell membrane. Its activity is regulated as follows. Inhibited by CCCP, but is apparently not affected by the concentration of sodium. Functionally, low-affinity transporter of alanine and high-affinity transporter of lactate and pyruvate. Can also transport other monocarboxylates such as propionate, butyrate, alpha-hydroxybutyrate or acetate. May be proton coupled. Required for optimal growth on alanine or pyruvate and ammonia. The polypeptide is Monocarboxylate transport permease protein (Rhizobium johnstonii (strain DSM 114642 / LMG 32736 / 3841) (Rhizobium leguminosarum bv. viciae)).